The sequence spans 531 residues: Squalene epoxidase 1 (531 aa).

The chain crosses the membrane as a helical span at residues 9–29 (ILPLLISSLLISFVAFYGFFV). Residues 70 to 71 (VA), 90 to 91 (ER), R98, R169, V185, D347, and M360 contribute to the FAD site. A run of 2 helical transmembrane segments spans residues 458-478 (LVCHFFAVAVYGVIRLLIPFP) and 483-503 (IWLGAKLISGASGIIFPIIKA).

This sequence belongs to the squalene monooxygenase family. FAD serves as cofactor. Expressed in seedlings, leaves, stems, inflorescences, sepals, style and siliques. Expressed in expanded cotyledons, root tips and cortical cells of the root elongation zone, but not in root hair cells. In leaves, expressed in most cells, with a very strong expression in stomata.

Its subcellular location is the membrane. The enzyme catalyses squalene + reduced [NADPH--hemoprotein reductase] + O2 = (S)-2,3-epoxysqualene + oxidized [NADPH--hemoprotein reductase] + H2O + H(+). It functions in the pathway terpene metabolism; lanosterol biosynthesis; lanosterol from farnesyl diphosphate: step 2/3. In terms of biological role, catalyzes the stereospecific oxidation of squalene to (S)-2,3-epoxysqualene, and is considered to be a rate-limiting enzyme in steroid biosynthesis. Can produce not only oxidosqualene, but also 2,3:22,23-dioxidosqualene. Main squalene epoxidase in the root. Sqe1 mutants may show defects in membrane lipid rafts, impairing the correct localization of RHD2 NADPH oxidase and the proper polarized production of ROS. The polypeptide is Squalene epoxidase 1 (SQE1) (Arabidopsis thaliana (Mouse-ear cress)).